The chain runs to 427 residues: Glutamyl-tRNA reductase (427 aa).

Substrate-binding positions include 49-52 (TCNR), S101, 106-108 (EPQ), and Q112. Residue C50 is the Nucleophile of the active site. NADP(+) is bound at residue 181–186 (GAGETI). The disordered stretch occupies residues 407-427 (FPATPGYRHPPVRPDDADPAP). A compositionally biased stretch (basic and acidic residues) spans 418 to 427 (VRPDDADPAP).

It belongs to the glutamyl-tRNA reductase family. As to quaternary structure, homodimer.

It catalyses the reaction (S)-4-amino-5-oxopentanoate + tRNA(Glu) + NADP(+) = L-glutamyl-tRNA(Glu) + NADPH + H(+). It functions in the pathway porphyrin-containing compound metabolism; protoporphyrin-IX biosynthesis; 5-aminolevulinate from L-glutamyl-tRNA(Glu): step 1/2. Functionally, catalyzes the NADPH-dependent reduction of glutamyl-tRNA(Glu) to glutamate 1-semialdehyde (GSA). In Stenotrophomonas maltophilia (strain R551-3), this protein is Glutamyl-tRNA reductase.